A 463-amino-acid chain; its full sequence is Exodeoxyribonuclease 7 large subunit (463 aa).

This sequence belongs to the XseA family. As to quaternary structure, heterooligomer composed of large and small subunits.

Its subcellular location is the cytoplasm. The catalysed reaction is Exonucleolytic cleavage in either 5'- to 3'- or 3'- to 5'-direction to yield nucleoside 5'-phosphates.. Its function is as follows. Bidirectionally degrades single-stranded DNA into large acid-insoluble oligonucleotides, which are then degraded further into small acid-soluble oligonucleotides. The protein is Exodeoxyribonuclease 7 large subunit of Pseudomonas syringae pv. syringae (strain B728a).